The following is a 484-amino-acid chain: DNA-binding protein (484 aa).

The segment at Met-1–Pro-69 is disordered. Positions Ser-51–Glu-60 are enriched in low complexity. At Tyr-150 the chain carries Phosphotyrosine; by host. Positions 239 and 241 each coordinate Zn(2+). The tract at residues Val-252–Ile-286 is flexible loop. Zn(2+) contacts are provided by Cys-294, Cys-310, Cys-351, Cys-353, Cys-405, and Cys-421. The segment at Ile-468 to Phe-484 is C-terminal arm, DBP binding.

Belongs to the adenoviridae E2A DNA-binding protein family. Homomultimerizes on viral ssDNA bound to pTP. Forms a initiation complex with viral polymerase, pTP and hosts NFIA and POU2F1/OCT1. Interacts with host SRCAP.

It is found in the host nucleus. Plays a role in the elongation phase of viral strand displacement replication by unwinding the template in an ATP-independent fashion, employing its capacity to form multimers. Also enhances the rate of initiation. Released from template upon second strand synthesis. Assembles in complex with viral pTP, viral pol, host NFIA and host POU2F1/OCT1 on viral origin of replication. Covers the whole ssDNA genome during synthesis. The complementary strand synthesis induces its relese from DNA template. May inhibit cellular transcription mediated by the interaction between host SRCAP and CBP. In Human adenovirus A serotype 12 (HAdV-12), this protein is DNA-binding protein.